Here is a 331-residue protein sequence, read N- to C-terminus: Putative serine/threonine-protein kinase ZK507.1 (331 aa).

A Protein kinase domain is found at 1-270; the sequence is MKVNEEGFAI…CKLTLKEPLV (270 aa). Asp116 (proton acceptor) is an active-site residue. Residues 302 to 314 show a composition bias toward basic and acidic residues; the sequence is SDRNEENSLDRSK. A disordered region spans residues 302–331; that stretch reads SDRNEENSLDRSKTGTLSFNNSKNKKPSRY.

The protein belongs to the protein kinase superfamily. Ser/Thr protein kinase family.

It carries out the reaction L-seryl-[protein] + ATP = O-phospho-L-seryl-[protein] + ADP + H(+). The enzyme catalyses L-threonyl-[protein] + ATP = O-phospho-L-threonyl-[protein] + ADP + H(+). The chain is Putative serine/threonine-protein kinase ZK507.1 from Caenorhabditis elegans.